The chain runs to 957 residues: Glycine dehydrogenase (decarboxylating) 2 (957 aa).

Lys707 carries the N6-(pyridoxal phosphate)lysine modification.

This sequence belongs to the GcvP family. As to quaternary structure, the glycine cleavage system is composed of four proteins: P, T, L and H. Pyridoxal 5'-phosphate is required as a cofactor.

The catalysed reaction is N(6)-[(R)-lipoyl]-L-lysyl-[glycine-cleavage complex H protein] + glycine + H(+) = N(6)-[(R)-S(8)-aminomethyldihydrolipoyl]-L-lysyl-[glycine-cleavage complex H protein] + CO2. Its function is as follows. The glycine cleavage system catalyzes the degradation of glycine. The P protein binds the alpha-amino group of glycine through its pyridoxal phosphate cofactor; CO(2) is released and the remaining methylamine moiety is then transferred to the lipoamide cofactor of the H protein. The protein is Glycine dehydrogenase (decarboxylating) 2 of Pseudomonas fluorescens (strain ATCC BAA-477 / NRRL B-23932 / Pf-5).